Here is a 426-residue protein sequence, read N- to C-terminus: MLLSKYFLPVLKEEPSEAQVTSHKLMLRSGMIRQQAAGIYTWLPLGLKVLKNIENIVRLNMNKAGALEVLMPCIQPAHLWMESGRFDNYGKEMLKFQDRHDNTLLFGPTNEDMITDIFRHNIKSYKDLPKNLYHIQWKFRDEIRPRFGVMRGREFLMKDAYSFDINEENAVKTYNQMYKAYINAFRDLGVFAIPVIADNGPIGGNLSHEFHIIAETGESTIYYDKKFKTLKDNPDIDVEEIKSWYAAAEEKYEVNKLPISEQEITSSKGIEVGHIFYIGSKYSVNMNALINDEYGKLTPIEMSSYGIGISRLVAAIIEANCDEKGIIWPSSVAPFKVSLINLNIHDSKCVELAEMAYKELSDKNIEVLYDDTEARPGSKFATHDLIGSPHQIIIGPKKAANNIVALKDRKSGVIEDIEVGSLMSVL.

Belongs to the class-II aminoacyl-tRNA synthetase family. ProS type 2 subfamily. In terms of assembly, homodimer.

Its subcellular location is the cytoplasm. The catalysed reaction is tRNA(Pro) + L-proline + ATP = L-prolyl-tRNA(Pro) + AMP + diphosphate. Functionally, catalyzes the attachment of proline to tRNA(Pro) in a two-step reaction: proline is first activated by ATP to form Pro-AMP and then transferred to the acceptor end of tRNA(Pro). The protein is Proline--tRNA ligase of Rickettsia peacockii (strain Rustic).